The sequence spans 281 residues: Bifunctional protein FolD 1 (281 aa).

NADP(+) contacts are provided by residues glycine 165–serine 167, serine 190, and isoleucine 231.

This sequence belongs to the tetrahydrofolate dehydrogenase/cyclohydrolase family. In terms of assembly, homodimer.

The enzyme catalyses (6R)-5,10-methylene-5,6,7,8-tetrahydrofolate + NADP(+) = (6R)-5,10-methenyltetrahydrofolate + NADPH. It catalyses the reaction (6R)-5,10-methenyltetrahydrofolate + H2O = (6R)-10-formyltetrahydrofolate + H(+). It functions in the pathway one-carbon metabolism; tetrahydrofolate interconversion. In terms of biological role, catalyzes the oxidation of 5,10-methylenetetrahydrofolate to 5,10-methenyltetrahydrofolate and then the hydrolysis of 5,10-methenyltetrahydrofolate to 10-formyltetrahydrofolate. The chain is Bifunctional protein FolD 1 from Desulfitobacterium hafniense (strain Y51).